The following is a 325-amino-acid chain: Dimethylsulfide dehydrogenase subunit beta (325 aa).

4Fe-4S ferredoxin-type domains are found at residues 6-35 (ISMV…RNGR), 123-154 (SYYF…KRQE), and 156-185 (GIVL…FNEQ). [4Fe-4S] cluster is bound by residues C15, C18, C21, C25, C132, C135, and C140. C144, C165, and C171 together coordinate [3Fe-4S] cluster. C175, C192, C195, C207, and C211 together coordinate [4Fe-4S] cluster.

Heterotrimer of alpha, beta and gamma subunits. [3Fe-4S] cluster is required as a cofactor. [4Fe-4S] cluster serves as cofactor.

The protein localises to the periplasm. Electron transfer subunit of the dehydrogenase during anaerobic growth on dimethyl sulfide. The protein is Dimethylsulfide dehydrogenase subunit beta (ddhB) of Rhodovulum sulfidophilum (Rhodobacter sulfidophilus).